We begin with the raw amino-acid sequence, 1416 residues long: DNA-directed RNA polymerase subunit beta' (1416 aa).

Zn(2+)-binding residues include Cys71, Cys73, Cys86, and Cys89. The Mg(2+) site is built by Asp461, Asp463, and Asp465. Zn(2+) is bound by residues Cys815, Cys889, Cys896, and Cys899.

Belongs to the RNA polymerase beta' chain family. In terms of assembly, the RNAP catalytic core consists of 2 alpha, 1 beta, 1 beta' and 1 omega subunit. When a sigma factor is associated with the core the holoenzyme is formed, which can initiate transcription. Mg(2+) serves as cofactor. The cofactor is Zn(2+).

The enzyme catalyses RNA(n) + a ribonucleoside 5'-triphosphate = RNA(n+1) + diphosphate. Its function is as follows. DNA-dependent RNA polymerase catalyzes the transcription of DNA into RNA using the four ribonucleoside triphosphates as substrates. In Haemophilus influenzae (strain 86-028NP), this protein is DNA-directed RNA polymerase subunit beta'.